The chain runs to 376 residues: Glutamate 5-kinase (376 aa).

Lysine 18 provides a ligand contact to ATP. Positions 58, 145, and 157 each coordinate substrate. Residues 177-178 (SD) and 218-224 (TGGMASK) each bind ATP. The PUA domain maps to 280 to 358 (TGALTLDAGA…SELPGELRRP (79 aa)).

This sequence belongs to the glutamate 5-kinase family.

The protein localises to the cytoplasm. It catalyses the reaction L-glutamate + ATP = L-glutamyl 5-phosphate + ADP. Its pathway is amino-acid biosynthesis; L-proline biosynthesis; L-glutamate 5-semialdehyde from L-glutamate: step 1/2. Catalyzes the transfer of a phosphate group to glutamate to form L-glutamate 5-phosphate. The polypeptide is Glutamate 5-kinase (Mycobacterium tuberculosis (strain ATCC 25177 / H37Ra)).